The chain runs to 445 residues: Plasmid recombination enzyme (445 aa).

Residues Y45 and Y113 each contribute to the DNA site.

This sequence belongs to the plasmid mobilization pre family.

This Bacillus thuringiensis protein is Plasmid recombination enzyme.